The following is a 242-amino-acid chain: UPF0309 protein BSUIS_B0903 (242 aa).

An SIS domain is found at 30–214; it reads AADLIAAAAR…ARLVGEGDAP (185 aa).

It belongs to the UPF0309 family.

This chain is UPF0309 protein BSUIS_B0903, found in Brucella suis (strain ATCC 23445 / NCTC 10510).